We begin with the raw amino-acid sequence, 174 residues long: Peptide deformylase (174 aa).

Residues C96 and H138 each contribute to the Fe cation site. Residue E139 is part of the active site. H142 contacts Fe cation.

Belongs to the polypeptide deformylase family. Requires Fe(2+) as cofactor.

It catalyses the reaction N-terminal N-formyl-L-methionyl-[peptide] + H2O = N-terminal L-methionyl-[peptide] + formate. Its function is as follows. Removes the formyl group from the N-terminal Met of newly synthesized proteins. Requires at least a dipeptide for an efficient rate of reaction. N-terminal L-methionine is a prerequisite for activity but the enzyme has broad specificity at other positions. This Nautilia profundicola (strain ATCC BAA-1463 / DSM 18972 / AmH) protein is Peptide deformylase.